The sequence spans 244 residues: Mitochondrial inner membrane protease atp23 (244 aa).

Residues 1-25 (MSSSEGNKPPLVPDSTKESEPQFDP) are disordered. Histidine 144 provides a ligand contact to a divalent metal cation. Glutamate 145 is an active-site residue. Histidine 148 contributes to the a divalent metal cation binding site.

The protein belongs to the peptidase M76 family.

The protein resides in the mitochondrion inner membrane. Its function is as follows. Has a dual role in the assembly of mitochondrial ATPase. Acts as a protease that removes N-terminal residues of mitochondrial ATPase CF(0) subunit 6 at the intermembrane space side. Also involved in the correct assembly of the membrane-embedded ATPase CF(0) particle, probably mediating association of subunit 6 with the subunit 9 ring. This Botryotinia fuckeliana (strain B05.10) (Noble rot fungus) protein is Mitochondrial inner membrane protease atp23 (atp23).